A 73-amino-acid chain; its full sequence is Translational regulator CsrA (73 aa).

This sequence belongs to the CsrA/RsmA family. In terms of assembly, homodimer; the beta-strands of each monomer intercalate to form a hydrophobic core, while the alpha-helices form wings that extend away from the core.

The protein resides in the cytoplasm. Its function is as follows. A translational regulator that binds mRNA to regulate translation initiation and/or mRNA stability. Usually binds in the 5'-UTR at or near the Shine-Dalgarno sequence preventing ribosome-binding, thus repressing translation. Its main target seems to be the major flagellin gene, while its function is anatagonized by FliW. The protein is Translational regulator CsrA of Lachnospira eligens (strain ATCC 27750 / DSM 3376 / VPI C15-48 / C15-B4) (Eubacterium eligens).